A 451-amino-acid chain; its full sequence is Phosphoglucosamine mutase (451 aa).

The active-site Phosphoserine intermediate is the S102. Mg(2+) contacts are provided by S102, D243, D245, and D247. Residue S102 is modified to Phosphoserine.

This sequence belongs to the phosphohexose mutase family. Requires Mg(2+) as cofactor. In terms of processing, activated by phosphorylation.

It carries out the reaction alpha-D-glucosamine 1-phosphate = D-glucosamine 6-phosphate. Functionally, catalyzes the conversion of glucosamine-6-phosphate to glucosamine-1-phosphate. The chain is Phosphoglucosamine mutase from Brucella abortus (strain 2308).